The following is a 770-amino-acid chain: Probable methyltransferase PMT25 (770 aa).

Over 1-17 (MAMGKYSRVDGKKSSSY) the chain is Cytoplasmic. The chain crosses the membrane as a helical; Signal-anchor for type II membrane protein span at residues 18-38 (GLTITIVLLLSLCLVGTWMFM). The Lumenal portion of the chain corresponds to 39–770 (SSWSAPADSA…ETETIKSAIA (732 aa)). The segment at 44-238 (PADSAGYSST…SSISKDQSSY (195 aa)) is disordered. Basic and acidic residues predominate over residues 55–79 (TAKDVSKNDLRKEEGDRDPKNFSDE). N-linked (GlcNAc...) asparagine glycans are attached at residues asparagine 75 and asparagine 107. The segment covering 92–109 (QVKTDSENSAEGNQVNES) has biased composition (polar residues). Composition is skewed to basic and acidic residues over residues 110–124 (SGEK…KESD) and 131–177 (DGEK…KAEE). N-linked (GlcNAc...) asparagine glycans are attached at residues asparagine 163 and asparagine 178. Polar residues-rich tracts occupy residues 205 to 220 (ESST…LVES) and 227 to 238 (QQSSISKDQSSY). N-linked (GlcNAc...) asparagine glycans are attached at residues asparagine 244 and asparagine 363.

This sequence belongs to the methyltransferase superfamily.

It localises to the golgi apparatus membrane. The protein is Probable methyltransferase PMT25 of Arabidopsis thaliana (Mouse-ear cress).